Here is a 333-residue protein sequence, read N- to C-terminus: Malate dehydrogenase (333 aa).

Residues 10–15 and Asp34 each bind NAD(+); that span reads GGGQIG. Residues Arg83 and Arg89 each contribute to the substrate site. NAD(+)-binding positions include Asn96 and 119–121; that span reads ITN. Substrate-binding residues include Asn121 and Arg152. His176 acts as the Proton acceptor in catalysis.

Belongs to the LDH/MDH superfamily. MDH type 3 family.

It carries out the reaction (S)-malate + NAD(+) = oxaloacetate + NADH + H(+). Functionally, catalyzes the reversible oxidation of malate to oxaloacetate. The sequence is that of Malate dehydrogenase from Parvibaculum lavamentivorans (strain DS-1 / DSM 13023 / NCIMB 13966).